The primary structure comprises 514 residues: Na(+)/H(+) antiporter NhaB (514 aa).

A run of 12 helical transmembrane segments spans residues 23 to 43, 63 to 83, 97 to 117, 120 to 140, 144 to 164, 202 to 222, 238 to 258, 303 to 323, 357 to 377, 391 to 411, 447 to 467, and 475 to 495; these read LALL…PFIA, PLLP…TSAA, LLLM…LFIF, LLLS…AAAF, FLDA…FYGI, LMMH…VGEP, FFLR…LTCM, AVIG…VGLI, LTVF…APII, LFYL…VGTI, ATPN…APLI, and VWMA…CVEF.

This sequence belongs to the NhaB Na(+)/H(+) (TC 2.A.34) antiporter family.

The protein localises to the cell inner membrane. The catalysed reaction is 2 Na(+)(in) + 3 H(+)(out) = 2 Na(+)(out) + 3 H(+)(in). In terms of biological role, na(+)/H(+) antiporter that extrudes sodium in exchange for external protons. This Salmonella newport (strain SL254) protein is Na(+)/H(+) antiporter NhaB.